Reading from the N-terminus, the 534-residue chain is SWI/SNF complex component SNF12 homolog (534 aa).

Positions 1–12 (MSGNNNNPQKPQ) are enriched in polar residues. Disordered regions lie at residues 1–33 (MSGN…PGNQ) and 78–132 (MTMN…SPMR). Over residues 94–105 (PSSPSLTTPGSL) the composition is skewed to low complexity. An SWIB/MDM2 domain is found at 314 to 391 (YVPEKFKLST…SQKISHHLSP (78 aa)).

Belongs to the SMARCD family. As to quaternary structure, part of a SWI-SNF complex.

The protein resides in the nucleus. In terms of biological role, involved in transcriptional activation and repression of select genes by chromatin remodeling (alteration of DNA-nucleosome topology). In Arabidopsis thaliana (Mouse-ear cress), this protein is SWI/SNF complex component SNF12 homolog.